Consider the following 736-residue polypeptide: Capsid protein (736 aa).

The segment at 633 to 692 (ESDALTLSPVHRPKRPKRDTQVKEKTPEKDSDSAVQLRRLQPWIHSSQETKDEEEEIPEG) is disordered. Over residues 650-664 (RDTQVKEKTPEKDSD) the composition is skewed to basic and acidic residues.

The protein belongs to the anelloviridae capsid protein family.

The protein localises to the virion. Self assemble to form an icosahedral capsid. This Torque teno virus (isolate Human/Finland/Hel32/2002) (TTV) protein is Capsid protein.